A 564-amino-acid polypeptide reads, in one-letter code: Nucleoprotein (564 aa).

The tract at residues 54–236 (LRKNKRGEED…VTKDESSINI (183 aa)) is binding site for the cap structure m7GTP. Mn(2+) is bound by residues aspartate 380 and glutamate 382. The Zn(2+) site is built by glutamate 390, cysteine 497, histidine 500, and cysteine 525. Residue aspartate 529 coordinates Mn(2+).

Belongs to the arenaviridae nucleocapsid protein family. As to quaternary structure, homomultimerizes to form the nucleocapsid. Binds to viral genomic RNA. Interacts with glycoprotein G2. Interacts with protein Z; this interaction probably directs the encapsidated genome to budding sites. Interacts with protein L; this interaction does not interfere with Z-L interaction. Interacts with host IKBKE (via Protein kinase domain); the interaction inhibits IKBKE kinase activity.

It localises to the virion. It is found in the host cytoplasm. Its function is as follows. Encapsidates the genome, protecting it from nucleases. The encapsidated genomic RNA is termed the nucleocapsid (NC). Serves as template for viral transcription and replication. The increased presence of protein N in host cell does not seem to trigger the switch from transcription to replication as observed in other negative strain RNA viruses. Through the interaction with host IKBKE, strongly inhibits the phosphorylation and nuclear translocation of host IRF3, a protein involved in interferon activation pathway, leading to the inhibition of interferon-beta and IRF3-dependent promoters activation. Also encodes a functional 3'-5' exoribonuclease that degrades preferentially dsRNA substrates and thereby participates in the suppression of interferon induction. The protein is Nucleoprotein of Calomys callosus (Large vesper mouse).